The primary structure comprises 111 residues: TPR repeat-containing protein associated with Hsp90 (111 aa).

The residue at position 2 (Ser2) is an N-acetylserine. TPR repeat units follow at residues 4 to 37 and 39 to 71; these read FEKQ…QPQN and VGYS…TSTA.

In terms of assembly, component of the R2TP complex composed at least of RVB1, RVB2, TAH1 and PIH1. Also interacts with HSP90.

It localises to the cytoplasm. It is found in the nucleus. The sequence is that of TPR repeat-containing protein associated with Hsp90 (TAH1) from Saccharomyces cerevisiae (strain ATCC 204508 / S288c) (Baker's yeast).